A 144-amino-acid polypeptide reads, in one-letter code: 3-hydroxyacyl-[acyl-carrier-protein] dehydratase FabZ (144 aa).

Residue His51 is part of the active site.

This sequence belongs to the thioester dehydratase family. FabZ subfamily.

The protein resides in the cytoplasm. It catalyses the reaction a (3R)-hydroxyacyl-[ACP] = a (2E)-enoyl-[ACP] + H2O. Its function is as follows. Involved in unsaturated fatty acids biosynthesis. Catalyzes the dehydration of short chain beta-hydroxyacyl-ACPs and long chain saturated and unsaturated beta-hydroxyacyl-ACPs. The protein is 3-hydroxyacyl-[acyl-carrier-protein] dehydratase FabZ (fabZ1) of Enterococcus faecalis (strain ATCC 700802 / V583).